The sequence spans 433 residues: uncharacterized protein (433 aa).

Residues 258–304 are a coiled coil; the sequence is KNIKSKLLLELRQLKNNITNLQNKITKTMDNVKKIIEEIEQSKNKVT.

This sequence belongs to the mimivirus R160 family.

The protein localises to the virion. This is an uncharacterized protein from Acanthamoeba polyphaga mimivirus (APMV).